Consider the following 292-residue polypeptide: MVNQNKIIPYLFLVPALVFLLFVYIPIFENVFLSLFQWSSFSPEKTFIGLKNYVELFHDPVFYQALTNNVLYAVISIVCQVFGGLILAAVLEDKLVRKWSPFFRTVFFLPVVISMTVIALLFDFIYNPETGLLNQLLQAIGLDQLTRAWLGDDSTAMLSVIFVSQWQSVGYIAMLYIVSIQKIPDELYEAARLDGAGKIQQFFHITVPQTKEMSFVAVVMTLTGAFTVFNEPYILTGGGPGKASEVLSTFLYKSAFTKDMMGYASAIATVVLIITLALSLMQMKFFKTGKEE.

6 consecutive transmembrane segments (helical) span residues 7-27 (IIPY…YIPI), 70-90 (VLYA…LAAV), 106-126 (VFFL…DFIY), 160-180 (VIFV…IVSI), 215-235 (FVAV…PYIL), and 260-280 (MMGY…ALSL). An ABC transmembrane type-1 domain is found at 66–282 (LTNNVLYAVI…IITLALSLMQ (217 aa)).

This sequence belongs to the binding-protein-dependent transport system permease family. MalFG subfamily.

It is found in the cell membrane. Probably part of the binding-protein-dependent transport system YurMNO. Probably responsible for the translocation of the substrate across the membrane. The protein is Probable ABC transporter permease protein YurN (yurN) of Bacillus subtilis (strain 168).